A 300-amino-acid polypeptide reads, in one-letter code: N-acetylmuramic acid 6-phosphate etherase (300 aa).

The SIS domain occupies 57-220 (VAAALRAGGR…STGAMIRIGK (164 aa)). The active-site Proton donor is the E85. Residue E116 is part of the active site.

This sequence belongs to the GCKR-like family. MurNAc-6-P etherase subfamily. As to quaternary structure, homodimer.

The catalysed reaction is N-acetyl-D-muramate 6-phosphate + H2O = N-acetyl-D-glucosamine 6-phosphate + (R)-lactate. Its pathway is amino-sugar metabolism; 1,6-anhydro-N-acetylmuramate degradation. The protein operates within amino-sugar metabolism; N-acetylmuramate degradation. It participates in cell wall biogenesis; peptidoglycan recycling. Functionally, specifically catalyzes the cleavage of the D-lactyl ether substituent of MurNAc 6-phosphate, producing GlcNAc 6-phosphate and D-lactate. Together with AnmK, is also required for the utilization of anhydro-N-acetylmuramic acid (anhMurNAc) either imported from the medium or derived from its own cell wall murein, and thus plays a role in cell wall recycling. The polypeptide is N-acetylmuramic acid 6-phosphate etherase (Klebsiella aerogenes (Enterobacter aerogenes)).